The chain runs to 241 residues: Protocatechuate 3,4-dioxygenase beta chain (241 aa).

Residues Y109, Y148, H161, and H163 each contribute to the Fe cation site.

It belongs to the intradiol ring-cleavage dioxygenase family. In terms of assembly, the enzyme is an oligomer of 12 copies of the alpha and beta chains. The cofactor is Fe(3+).

The catalysed reaction is 3,4-dihydroxybenzoate + O2 = 3-carboxy-cis,cis-muconate + 2 H(+). It participates in aromatic compound metabolism; beta-ketoadipate pathway; 3-carboxy-cis,cis-muconate from 3,4-dihydroxybenzoate: step 1/1. Plays an essential role in the utilization of numerous aromatic and hydroaromatic compounds via the beta-ketoadipate pathway. The polypeptide is Protocatechuate 3,4-dioxygenase beta chain (pcaH) (Acinetobacter baylyi (strain ATCC 33305 / BD413 / ADP1)).